Consider the following 389-residue polypeptide: Phospho-N-acetylmuramoyl-pentapeptide-transferase (389 aa).

10 helical membrane passes run 25–45 (RAVM…PWVI), 73–93 (TMGG…WADL), 97–117 (FIWI…VDDY), 134–154 (FFWQ…SVSE), 190–210 (VSYP…IVGS), 222–242 (GLVI…AYVM), 258–278 (GAGE…AFLW), 286–306 (VFMG…IAVI), 311–331 (IVLF…MLQV), and 366–386 (QVVV…LSSL).

It belongs to the glycosyltransferase 4 family. MraY subfamily. Mg(2+) is required as a cofactor.

Its subcellular location is the cell inner membrane. It carries out the reaction UDP-N-acetyl-alpha-D-muramoyl-L-alanyl-gamma-D-glutamyl-meso-2,6-diaminopimeloyl-D-alanyl-D-alanine + di-trans,octa-cis-undecaprenyl phosphate = di-trans,octa-cis-undecaprenyl diphospho-N-acetyl-alpha-D-muramoyl-L-alanyl-D-glutamyl-meso-2,6-diaminopimeloyl-D-alanyl-D-alanine + UMP. The protein operates within cell wall biogenesis; peptidoglycan biosynthesis. Catalyzes the initial step of the lipid cycle reactions in the biosynthesis of the cell wall peptidoglycan: transfers peptidoglycan precursor phospho-MurNAc-pentapeptide from UDP-MurNAc-pentapeptide onto the lipid carrier undecaprenyl phosphate, yielding undecaprenyl-pyrophosphoryl-MurNAc-pentapeptide, known as lipid I. This chain is Phospho-N-acetylmuramoyl-pentapeptide-transferase, found in Polynucleobacter necessarius subsp. necessarius (strain STIR1).